The sequence spans 315 residues: Alpha- and gamma-adaptin-binding protein p34 (315 aa).

The disordered stretch occupies residues 197 to 234; that stretch reads IGSADPCHPEQPHLPAADSTESLSDHRGGASNTTDAQV. 2 positions are modified to phosphoserine: Ser310 and Ser311.

In terms of assembly, associated with AP-1 and AP-2 complexes. In terms of tissue distribution, widely expressed, including in skin and keratinocytes, with highest levels in adrenal gland, rectum and thymus.

The protein localises to the cytoplasm. It is found in the cytosol. Functionally, may be involved in endocytic recycling of growth factor receptors such as EGFR. The sequence is that of Alpha- and gamma-adaptin-binding protein p34 (AAGAB) from Homo sapiens (Human).